Consider the following 177-residue polypeptide: Photosystem I assembly protein Ycf4 (177 aa).

The next 2 helical transmembrane spans lie at 20 to 40 and 60 to 80; these read VALL…SSYF and LVMG…WAVI.

The protein belongs to the Ycf4 family.

The protein localises to the cellular thylakoid membrane. Its function is as follows. Seems to be required for the assembly of the photosystem I complex. The chain is Photosystem I assembly protein Ycf4 from Synechococcus sp. (strain RCC307).